The primary structure comprises 458 residues: tRNA modification GTPase MnmE (458 aa).

Positions 23, 80, and 122 each coordinate (6S)-5-formyl-5,6,7,8-tetrahydrofolate. The TrmE-type G domain maps to 218–380 (GMKIVIAGRP…LREHLQQTMG (163 aa)). Residue asparagine 228 participates in K(+) binding. Residues 228–233 (NVGKSS), 247–253 (TQIPGTT), 272–275 (DTAG), and 361–363 (SAR) each bind GTP. Serine 232 serves as a coordination point for Mg(2+). K(+)-binding residues include threonine 247, isoleucine 249, and threonine 252. A Mg(2+)-binding site is contributed by threonine 253. Lysine 458 contacts (6S)-5-formyl-5,6,7,8-tetrahydrofolate.

The protein belongs to the TRAFAC class TrmE-Era-EngA-EngB-Septin-like GTPase superfamily. TrmE GTPase family. Homodimer. Heterotetramer of two MnmE and two MnmG subunits. The cofactor is K(+).

The protein localises to the cytoplasm. Exhibits a very high intrinsic GTPase hydrolysis rate. Involved in the addition of a carboxymethylaminomethyl (cmnm) group at the wobble position (U34) of certain tRNAs, forming tRNA-cmnm(5)s(2)U34. In Hamiltonella defensa subsp. Acyrthosiphon pisum (strain 5AT), this protein is tRNA modification GTPase MnmE.